The sequence spans 180 residues: Endoribonuclease YbeY (180 aa).

Zn(2+)-binding residues include histidine 118, histidine 122, and histidine 128.

This sequence belongs to the endoribonuclease YbeY family. The cofactor is Zn(2+).

Its subcellular location is the cytoplasm. In terms of biological role, single strand-specific metallo-endoribonuclease involved in late-stage 70S ribosome quality control and in maturation of the 3' terminus of the 16S rRNA. This is Endoribonuclease YbeY from Rhodococcus erythropolis (strain PR4 / NBRC 100887).